The following is a 134-amino-acid chain: Small ribosomal subunit protein uS12 (134 aa).

D89 carries the 3-methylthioaspartic acid modification. The tract at residues 101 to 134 is disordered; it reads TLDASGVNGRNQSRSKYGTKRPKPGQAAAGGKKK. The span at 125 to 134 shows a compositional bias: low complexity; the sequence is GQAAAGGKKK.

Belongs to the universal ribosomal protein uS12 family. In terms of assembly, part of the 30S ribosomal subunit. Contacts proteins S8 and S17. May interact with IF1 in the 30S initiation complex.

With S4 and S5 plays an important role in translational accuracy. Its function is as follows. Interacts with and stabilizes bases of the 16S rRNA that are involved in tRNA selection in the A site and with the mRNA backbone. Located at the interface of the 30S and 50S subunits, it traverses the body of the 30S subunit contacting proteins on the other side and probably holding the rRNA structure together. The combined cluster of proteins S8, S12 and S17 appears to hold together the shoulder and platform of the 30S subunit. This chain is Small ribosomal subunit protein uS12, found in Gemmatimonas aurantiaca (strain DSM 14586 / JCM 11422 / NBRC 100505 / T-27).